We begin with the raw amino-acid sequence, 335 residues long: GTPase Obg (335 aa).

Residues 1–158 form the Obg domain; it reads MFVDQITLEL…RLVELELKLI (158 aa). The OBG-type G domain occupies 159–334; that stretch reads ADIGLVGFPN…LHDLFKSKLS (176 aa). GTP contacts are provided by residues 165–172, 190–194, 215–218, 285–288, and 315–317; these read GFPNAGKS, FTTLH, DIPG, NKID, and SGL. Mg(2+) is bound by residues S172 and T192.

Belongs to the TRAFAC class OBG-HflX-like GTPase superfamily. OBG GTPase family. In terms of assembly, monomer. The cofactor is Mg(2+).

Its subcellular location is the cytoplasm. In terms of biological role, an essential GTPase which binds GTP, GDP and possibly (p)ppGpp with moderate affinity, with high nucleotide exchange rates and a fairly low GTP hydrolysis rate. Plays a role in control of the cell cycle, stress response, ribosome biogenesis and in those bacteria that undergo differentiation, in morphogenesis control. The chain is GTPase Obg from Chlamydia muridarum (strain MoPn / Nigg).